Consider the following 294-residue polypeptide: MASTRDIRRRIKSVKNTRQITKAMELVAASKMKKAQQAAVAGRPYAELMAQMLATLGDRVEEAQHPFLVQREVKTRGIILITTDKGLAGPLNANLFKLVTDIQSPAKYVVVGRKGAQFIARTRRDLLAEFQVSDRAAFAEVKVVVEFMTKQFIDGVVDSVEVIWPRFKNTLVQIPTIAQLLPLRGVQHAVESLQHGTGVSAPRSPAVEAQMLFEPDPVSVLSALLPLYINREVYHQVLDAKASEHSARMVAMKTAKDNATKLLDDLTLEYNKARQAGITQEIIEIAAAQFAAAS.

Belongs to the ATPase gamma chain family. F-type ATPases have 2 components, CF(1) - the catalytic core - and CF(0) - the membrane proton channel. CF(1) has five subunits: alpha(3), beta(3), gamma(1), delta(1), epsilon(1). CF(0) has three main subunits: a, b and c.

It is found in the cell membrane. Produces ATP from ADP in the presence of a proton gradient across the membrane. The gamma chain is believed to be important in regulating ATPase activity and the flow of protons through the CF(0) complex. In Opitutus terrae (strain DSM 11246 / JCM 15787 / PB90-1), this protein is ATP synthase gamma chain.